A 410-amino-acid polypeptide reads, in one-letter code: Transcription factor PHYTOCHROME INTERACTING FACTOR-LIKE 13 (410 aa).

The span at 82–92 (AAAAAGPSSHH) shows a compositional bias: low complexity. Disordered regions lie at residues 82-110 (AAAA…MRSG) and 137-225 (CRDA…AEVH). The span at 93–104 (APPPDLPPPAAR) shows a compositional bias: pro residues. Residues 187-197 (GREDSDSRSED) are compositionally biased toward basic and acidic residues. The span at 209–219 (SSRRYGSKRRT) shows a compositional bias: basic residues. Residues 220-233 (RAAEVHNLSERRRR) form a basic motif region. Residues 220–269 (RAAEVHNLSERRRRDRINEKMRALQELIPHCNKTDKASILDEAIEYLKSL) form the bHLH domain. A helix-loop-helix motif region spans residues 234–269 (DRINEKMRALQELIPHCNKTDKASILDEAIEYLKSL). The disordered stretch occupies residues 357–410 (PFLHPDGWQTVPPQVSGPYASGPQVAQQNQIPKASASTVLPNSGAEQPPTSDGI). A compositionally biased stretch (polar residues) spans 380-410 (QVAQQNQIPKASASTVLPNSGAEQPPTSDGI).

Belongs to the bHLH protein family. Interacts with PRR1. Interacts with LF. In terms of tissue distribution, highly expressed in the node portions of the stem. Expressed in the leaves and the basal part of shoots.

It localises to the nucleus. Its function is as follows. Transcription factor that may act as negative regulator of phyB-dependent light signal transduction. Transcription activator that acts as a positive regulator of internode elongation. May function via regulation of cell wall-related genes. May play a role in a drought-associated growth-restriction mechanism in response to drought stress. The chain is Transcription factor PHYTOCHROME INTERACTING FACTOR-LIKE 13 from Oryza sativa subsp. japonica (Rice).